The chain runs to 176 residues: Tubulin polymerization-promoting protein family member 3 (176 aa).

An N-acetylalanine modification is found at Ala2. A disordered region spans residues 132–152 (TGSHKERFDESGKGKGIAGRQ). Positions 134 to 144 (SHKERFDESGK) are enriched in basic and acidic residues.

This sequence belongs to the TPPP family.

The protein localises to the cytoplasm. It localises to the cytoskeleton. In terms of biological role, regulator of microtubule dynamic that has microtubule bundling activity. Required for embryo implantation; possibly by regulating beta-catenin. Also required for decidualization via regulation of beta-catenin. The protein is Tubulin polymerization-promoting protein family member 3 of Mus musculus (Mouse).